Consider the following 101-residue polypeptide: Protein S100-A7A (101 aa).

EF-hand domains follow at residues 13-48 and 50-85; these read MIDMFHKYTGRDGKIEKPSLLTMMKENFPNFLSACD and KGIHYLATVFEKKDKNEDKKIDFSEFLSLLGDIAAD. Zn(2+)-binding residues include His18, Glu28, and Glu38. Ca(2+)-binding residues include Asp63 and Asn65. Glu66 contacts Zn(2+). The Ca(2+) site is built by Asp67, Lys69, and Glu74. Positions 87 and 91 each coordinate Zn(2+).

It belongs to the S-100 family. Overexpressed in psoriasis.

Its subcellular location is the cytoplasm. In terms of biological role, may be involved in epidermal differentiation and inflammation and might therefore be important for the pathogenesis of psoriasis and other diseases. This chain is Protein S100-A7A (S100A7A), found in Homo sapiens (Human).